The sequence spans 529 residues: MKEIIKSEIFKILGRDFVLEKPKDKSLAHYATPLAFSLAKELKKSPVAIANELACKFENSKIFEVSAVNGYLNFKLKGEFLDEISKDALKNGDKFASGKARQDGSTFIEYISANPTGPLHIGHVRGAVYGDTLARIGTHLGYKIFTEYYINDAGNQIDLLGTSISLAARDVLFHENVEYPQKYYRGEYIVDIANEALKKFGKEIFYDEARNLELAEFGKDIVLDIIKKDLAGVGISIQGWASEKALYKELEPTIEKLKRSNQMYEKEGATYIASTTLGDDNDRVVVRNDGRPTYLAGDIIYHNDKFERNYDHYINIWGADHHGYIARLKAAIHFLGYDENRLEIILMQMVSLLKDGKPYKMSKRAGNAVLMSDIVEEIGSDALRFIFISKANTSSLEFDIDELKKEDSSNPIFYINYAHARVNQIFAKAGKSVSDVLDASLENLDDNAKNLLFEALILPEILEDAFASRQLQKVSDYLKSLAASFHKFYNENRVIGSANEESLLKLFAVVALSLRTALSLIGITAKDRM.

A 'HIGH' region motif is present at residues 113-123 (ANPTGPLHIGH).

The protein belongs to the class-I aminoacyl-tRNA synthetase family. In terms of assembly, monomer.

It is found in the cytoplasm. It carries out the reaction tRNA(Arg) + L-arginine + ATP = L-arginyl-tRNA(Arg) + AMP + diphosphate. This chain is Arginine--tRNA ligase, found in Campylobacter curvus (strain 525.92).